The sequence spans 157 residues: Urease accessory protein UreE (157 aa).

This sequence belongs to the UreE family.

The protein localises to the cytoplasm. In terms of biological role, involved in urease metallocenter assembly. Binds nickel. Probably functions as a nickel donor during metallocenter assembly. The polypeptide is Urease accessory protein UreE (Paenarthrobacter aurescens (strain TC1)).